Consider the following 207-residue polypeptide: Large ribosomal subunit protein uL4 (207 aa).

The interval 48–70 is disordered; sequence KAQKTRSEVSGGGAKPWRQKGTG.

It belongs to the universal ribosomal protein uL4 family. Part of the 50S ribosomal subunit.

One of the primary rRNA binding proteins, this protein initially binds near the 5'-end of the 23S rRNA. It is important during the early stages of 50S assembly. It makes multiple contacts with different domains of the 23S rRNA in the assembled 50S subunit and ribosome. Its function is as follows. Forms part of the polypeptide exit tunnel. This Francisella philomiragia subsp. philomiragia (strain ATCC 25017 / CCUG 19701 / FSC 153 / O#319-036) protein is Large ribosomal subunit protein uL4.